The primary structure comprises 117 residues: MALYEHVMIARQDLSNAQAEALNEHFGAVLADNGGTVVDTEYWGVKTMAYKINKNRKGHYSYLRTDAPSDAVQEMERLMRLHDDVMRVLTIKVDAHDEGPSVQMQKRDEREGRRERR.

The tract at residues 96 to 117 (HDEGPSVQMQKRDEREGRRERR) is disordered.

It belongs to the bacterial ribosomal protein bS6 family.

In terms of biological role, binds together with bS18 to 16S ribosomal RNA. This Jannaschia sp. (strain CCS1) protein is Small ribosomal subunit protein bS6.